Consider the following 195-residue polypeptide: FMN-dependent NADH:quinone oxidoreductase 2 (195 aa).

Residues 16–18 (SVS) and 85–88 (MWNL) contribute to the FMN site.

Belongs to the azoreductase type 1 family. In terms of assembly, homodimer. The cofactor is FMN.

The enzyme catalyses 2 a quinone + NADH + H(+) = 2 a 1,4-benzosemiquinone + NAD(+). The catalysed reaction is N,N-dimethyl-1,4-phenylenediamine + anthranilate + 2 NAD(+) = 2-(4-dimethylaminophenyl)diazenylbenzoate + 2 NADH + 2 H(+). In terms of biological role, quinone reductase that provides resistance to thiol-specific stress caused by electrophilic quinones. Functionally, also exhibits azoreductase activity. Catalyzes the reductive cleavage of the azo bond in aromatic azo compounds to the corresponding amines. This Photobacterium profundum (strain SS9) protein is FMN-dependent NADH:quinone oxidoreductase 2.